The chain runs to 426 residues: Serine--tRNA ligase (426 aa).

233-235 (TSE) is an L-serine binding site. Residue 264 to 266 (RSE) coordinates ATP. Glu287 serves as a coordination point for L-serine. 351–354 (EISS) lines the ATP pocket. Ser387 is an L-serine binding site.

This sequence belongs to the class-II aminoacyl-tRNA synthetase family. Type-1 seryl-tRNA synthetase subfamily. Homodimer. The tRNA molecule binds across the dimer.

It is found in the cytoplasm. It catalyses the reaction tRNA(Ser) + L-serine + ATP = L-seryl-tRNA(Ser) + AMP + diphosphate + H(+). The catalysed reaction is tRNA(Sec) + L-serine + ATP = L-seryl-tRNA(Sec) + AMP + diphosphate + H(+). It functions in the pathway aminoacyl-tRNA biosynthesis; selenocysteinyl-tRNA(Sec) biosynthesis; L-seryl-tRNA(Sec) from L-serine and tRNA(Sec): step 1/1. Functionally, catalyzes the attachment of serine to tRNA(Ser). Is also able to aminoacylate tRNA(Sec) with serine, to form the misacylated tRNA L-seryl-tRNA(Sec), which will be further converted into selenocysteinyl-tRNA(Sec). The protein is Serine--tRNA ligase of Xylella fastidiosa (strain 9a5c).